The chain runs to 442 residues: Betaine reductase complex component B subunit alpha (442 aa).

In terms of assembly, heterotetramer of two alpha and two beta subunits. Component of the betaine reductase complex, together with components A and C. PB is substrate specific.

It catalyses the reaction acetyl phosphate + trimethylamine + [thioredoxin]-disulfide + H2O = glycine betaine + [thioredoxin]-dithiol + phosphate + H(+). In the first step of betaine reductase, the substrate is bound to component PB via a Schiff base intermediate. Then the PB-activated substrate is nucleophilically attacked by the selenol anion of component PA to transform it to a carboxymethylated selenoether and the respective amine. By action of component PC, acetyl phosphate is formed, leaving component PA in its oxidized state. Finally component PA becomes reduced by the thioredoxin system to start a new catalytic cycle of reductive deamination. This Peptoclostridium acidaminophilum (Eubacterium acidaminophilum) protein is Betaine reductase complex component B subunit alpha (grdI).